Here is a 209-residue protein sequence, read N- to C-terminus: Redox-sensing transcriptional repressor Rex (209 aa).

Residues 16–55 (VYIQVLTGLKRDGVEVISSEKLARACSVNPSQIRKDLAYF) constitute a DNA-binding region (H-T-H motif). Residue 90 to 95 (GVGNLG) participates in NAD(+) binding.

The protein belongs to the transcriptional regulatory Rex family. In terms of assembly, homodimer.

It localises to the cytoplasm. Its function is as follows. Modulates transcription in response to changes in cellular NADH/NAD(+) redox state. The polypeptide is Redox-sensing transcriptional repressor Rex (Maridesulfovibrio salexigens (strain ATCC 14822 / DSM 2638 / NCIMB 8403 / VKM B-1763) (Desulfovibrio salexigens)).